Reading from the N-terminus, the 110-residue chain is Nucleoid-associated protein Tola_2216 (110 aa).

This sequence belongs to the YbaB/EbfC family. As to quaternary structure, homodimer.

The protein localises to the cytoplasm. Its subcellular location is the nucleoid. Binds to DNA and alters its conformation. May be involved in regulation of gene expression, nucleoid organization and DNA protection. The protein is Nucleoid-associated protein Tola_2216 of Tolumonas auensis (strain DSM 9187 / NBRC 110442 / TA 4).